Consider the following 245-residue polypeptide: Eukaryotic translation initiation factor 3 subunit K (245 aa).

Residues 46 to 227 (YDCYANLALL…EAKGTVVREN (182 aa)) form the PCI domain.

Belongs to the eIF-3 subunit K family. As to quaternary structure, component of the eukaryotic translation initiation factor 3 (eIF-3) complex.

Its subcellular location is the cytoplasm. Functionally, component of the eukaryotic translation initiation factor 3 (eIF-3) complex, which is involved in protein synthesis of a specialized repertoire of mRNAs and, together with other initiation factors, stimulates binding of mRNA and methionyl-tRNAi to the 40S ribosome. The eIF-3 complex specifically targets and initiates translation of a subset of mRNAs involved in cell proliferation. The chain is Eukaryotic translation initiation factor 3 subunit K from Botryotinia fuckeliana (strain B05.10) (Noble rot fungus).